The primary structure comprises 327 residues: GMP reductase (327 aa).

Cysteine 176 (thioimidate intermediate) is an active-site residue. 205 to 228 (IIADGGIRTHGDIAKSIRFGASMV) lines the NADP(+) pocket.

This sequence belongs to the IMPDH/GMPR family. GuaC type 2 subfamily.

It catalyses the reaction IMP + NH4(+) + NADP(+) = GMP + NADPH + 2 H(+). Catalyzes the irreversible NADPH-dependent deamination of GMP to IMP. It functions in the conversion of nucleobase, nucleoside and nucleotide derivatives of G to A nucleotides, and in maintaining the intracellular balance of A and G nucleotides. The protein is GMP reductase of Streptococcus suis (strain 05ZYH33).